A 276-amino-acid chain; its full sequence is Energy-coupling factor transporter ATP-binding protein EcfA2 (276 aa).

One can recognise an ABC transporter domain in the interval Met1–Asp233. Gly27 to Ser34 is an ATP binding site. The active-site Proton acceptor is Glu158.

Belongs to the ABC transporter superfamily. Energy-coupling factor EcfA family. Forms a stable energy-coupling factor (ECF) transporter complex composed of 2 membrane-embedded substrate-binding proteins (S component), 2 ATP-binding proteins (A component) and 2 transmembrane proteins (T component).

Its subcellular location is the cell membrane. Its function is as follows. ATP-binding (A) component of a common energy-coupling factor (ECF) ABC-transporter complex. Unlike classic ABC transporters this ECF transporter provides the energy necessary to transport a number of different substrates. This is Energy-coupling factor transporter ATP-binding protein EcfA2 from Bacillus subtilis (strain 168).